A 213-amino-acid polypeptide reads, in one-letter code: Penicillin-binding protein activator LpoB (213 aa).

The N-terminal stretch at 1–19 (MMKMNRYALVAALAIFLSG) is a signal peptide. A lipid anchor (N-palmitoyl cysteine) is attached at cysteine 20. The S-diacylglycerol cysteine moiety is linked to residue cysteine 20. The tract at residues 26–71 (PAPVDEVKPAPEQPAEPQQPVPVVPSVPTIPQQPGPIEHEDQTAQP) is disordered. A compositionally biased stretch (pro residues) spans 36 to 50 (PEQPAEPQQPVPVVP).

This sequence belongs to the LpoB family. In terms of assembly, interacts with PBP1b.

Its subcellular location is the cell outer membrane. Functionally, regulator of peptidoglycan synthesis that is essential for the function of penicillin-binding protein 1B (PBP1b). In Citrobacter koseri (strain ATCC BAA-895 / CDC 4225-83 / SGSC4696), this protein is Penicillin-binding protein activator LpoB.